The sequence spans 548 residues: uncharacterized protein (548 aa).

A phosphoserine mark is found at serine 19 and serine 25. At threonine 47 the chain carries Phosphothreonine.

This is an uncharacterized protein from Schizosaccharomyces pombe (strain 972 / ATCC 24843) (Fission yeast).